Reading from the N-terminus, the 772-residue chain is Elongin-A (772 aa).

The 76-residue stretch at 4–79 (ESALQVVEKL…AQWKKLVPVE (76 aa)) folds into the TFIIS N-terminal domain. Basic and acidic residues-rich tracts occupy residues 79-105 (ERNAEPDEQDFEKSNSRKRPRDALQKE) and 136-156 (LSELERPHKVSHGHERRDERK). 2 disordered regions span residues 79–403 (ERNA…FEQP) and 418–466 (KKKK…EKPA). Position 196 is a phosphoserine (Ser196). Composition is skewed to basic and acidic residues over residues 226–235 (QERHLGEPHG), 253–269 (RPVDAKSDEKASVVSRE), 275–308 (LSKEENRRPPSGDNAREKPPSSGVKKEKDREGSS), 321–343 (SDNHLKKPKHRDPEKAKLDKSKQ), and 372–384 (PEGKVKTNLDRKS). Residues Ser384 and Ser387 each carry the phosphoserine modification. A Phosphothreonine modification is found at Thr394. Lys434 is modified (N6-acetyllysine). Over residues 434 to 443 (KGLKKNDSKS) the composition is skewed to basic and acidic residues. At Ser516 the chain carries Phosphoserine. Residues 522-681 (EAGFTGRRMN…PPRDVRRRQE (160 aa)) are activation domain. The segment at 550-559 (TLHQQCIRVL) is BC-box. Residues 566 to 610 (IFEVGGVPYSVLEPVLERCTPDQLYRIEEYNHVLIEETDQLWKVH) enclose the F-box domain. Residues 674 to 732 (RDVRRRQEKFGTGGAAVPEKIKIKPAPYPMGSSHASASSISFNPSPEEPAYDGPSTSSA) are disordered. Residues 705 to 714 (SSHASASSIS) are compositionally biased toward low complexity.

As to quaternary structure, heterotrimer of an A (ELOA, ELOA2 or ELOA3P), ELOB and ELOC subunit. Part of a multisubunit ubiquitin ligase complex consisting of elongin BC complex (ELOB and ELOC), elongin A/ELOA, RBX1 and CUL5. Interacts with ERCC6; the interaction is induced by DNA damaging agents or inhibitors of RNA polymerase II elongation. Interacts (via BC-box) with CUL5.

The protein resides in the nucleus. SIII, also known as elongin, is a general transcription elongation factor that increases the RNA polymerase II transcription elongation past template-encoded arresting sites. Subunit A is transcriptionally active and its transcription activity is strongly enhanced by binding to the dimeric complex of the SIII regulatory subunits B and C (elongin BC complex). In terms of biological role, as part of a multisubunit complex composed of elongin BC complex (ELOB and ELOC), elongin A/ELOA, RBX1 and CUL5; polyubiquitinates monoubiquitinated POLR2A. This chain is Elongin-A, found in Homo sapiens (Human).